A 326-amino-acid chain; its full sequence is Glycerol-3-phosphate dehydrogenase [NAD(P)+] (326 aa).

W13, R33, and K107 together coordinate NADPH. 3 residues coordinate sn-glycerol 3-phosphate: K107, G135, and S137. Residue A139 participates in NADPH binding. Residues K190, D243, S253, R254, and N255 each coordinate sn-glycerol 3-phosphate. K190 acts as the Proton acceptor in catalysis. Residue R254 participates in NADPH binding. NADPH is bound by residues L273 and E275.

It belongs to the NAD-dependent glycerol-3-phosphate dehydrogenase family.

Its subcellular location is the cytoplasm. The enzyme catalyses sn-glycerol 3-phosphate + NAD(+) = dihydroxyacetone phosphate + NADH + H(+). It catalyses the reaction sn-glycerol 3-phosphate + NADP(+) = dihydroxyacetone phosphate + NADPH + H(+). The protein operates within membrane lipid metabolism; glycerophospholipid metabolism. Its function is as follows. Catalyzes the reduction of the glycolytic intermediate dihydroxyacetone phosphate (DHAP) to sn-glycerol 3-phosphate (G3P), the key precursor for phospholipid synthesis. In Brucella ovis (strain ATCC 25840 / 63/290 / NCTC 10512), this protein is Glycerol-3-phosphate dehydrogenase [NAD(P)+].